Reading from the N-terminus, the 555-residue chain is uncharacterized protein (555 aa).

ABC transporter domains are found at residues 4–244 (VKVK…PPYK) and 255–547 (IQVR…ARFM). ATP contacts are provided by residues 36 to 43 (GKSGAGKS) and 292 to 299 (GPSGVGKT).

This sequence belongs to the ABC transporter superfamily.

This is an uncharacterized protein from Methanocaldococcus jannaschii (strain ATCC 43067 / DSM 2661 / JAL-1 / JCM 10045 / NBRC 100440) (Methanococcus jannaschii).